A 310-amino-acid polypeptide reads, in one-letter code: HMG box-containing protein C28F2.11 (310 aa).

Low complexity predominate over residues 69 to 95 (ESPSKKATSPKKATPAAVAPVEATSAV). The interval 69-310 (ESPSKKATSP…TTPPTAKVAN (242 aa)) is disordered. Position 70 is a phosphoserine (S70). The residue at position 105 (T105) is a Phosphothreonine. Positions 117 to 187 (PKRPPSAYNL…AYEEEMAAYN (71 aa)) form a DNA-binding region, HMG box. 2 stretches are compositionally biased toward basic and acidic residues: residues 131 to 178 (QRSE…LREA) and 200 to 226 (VTAEETSTKPSEDLSSPTKKDLIDFSE). Phosphoserine occurs at positions 161, 214, and 215. T217 and T237 each carry phosphothreonine. A compositionally biased stretch (polar residues) spans 255-268 (STVPTSNVEPVSQP). S271, S278, S294, S295, and S297 each carry phosphoserine. A phosphothreonine mark is found at T302 and T305.

The protein resides in the cytoplasm. The polypeptide is HMG box-containing protein C28F2.11 (Schizosaccharomyces pombe (strain 972 / ATCC 24843) (Fission yeast)).